The chain runs to 151 residues: Sperm surface protein Sp17 (151 aa).

Residues Phe-68–Glu-98 show a composition bias toward basic and acidic residues. Disordered regions lie at residues Phe-68–Glu-115 and Ala-130–Lys-151. The IQ domain occupies Glu-114–Gln-143.

As to quaternary structure, homodimer. May interact with ROPN1. Testis- and sperm-specific.

Its subcellular location is the membrane. Functionally, sperm surface zona pellucida binding protein. Helps to bind spermatozoa to the zona pellucida with high affinity. Might function in binding zona pellucida and carbohydrates. The chain is Sperm surface protein Sp17 (SPA17) from Macaca fascicularis (Crab-eating macaque).